The sequence spans 383 residues: MSKSDYYEALGVARNASDSEIKKAYRRMAMKYHPDRNPGDKEAEARFKEAKEAYEILSDPQKRAAYDQFGHAGVDPSAGMGGAGGPGGPGGPDFADIFSDVFGDIFGGGGRRGGGGRRVFRGADLRYNLELSLEDAVRGTEVQIRVPTQEVCDACDGKGTKEGSQPETCPTCKGHGDVRIQQGFFSVQQTCPRCGGSGSVITDPCRKCGGRGRVQSQKTLSVRVPAGVDTGDRIRLSGEGEPGENGGPPGDLYVQIMVREHEFFQRDGANLRCEVPISITKAALGGEVEVPTLDGRVNLRIPAGAQSGKVFRVRGKGVKPVRGGPQGDLLCRVHVETPVNLTKKQKELLEEFGRTMDDTGDKHTPRTSSWLDKARKFFEDWKL.

The region spanning 5-70 (DYYEALGVAR…QKRAAYDQFG (66 aa)) is the J domain. A CR-type zinc finger spans residues 139-217 (GTEVQIRVPT…CGGRGRVQSQ (79 aa)). Zn(2+)-binding residues include Cys152, Cys155, Cys169, Cys172, Cys191, Cys194, Cys205, and Cys208. CXXCXGXG motif repeat units lie at residues 152–159 (CDACDGKG), 169–176 (CPTCKGHG), 191–198 (CPRCGGSG), and 205–212 (CRKCGGRG). The tract at residues 230–249 (TGDRIRLSGEGEPGENGGPP) is disordered.

The protein belongs to the DnaJ family. Homodimer. Requires Zn(2+) as cofactor.

It is found in the cytoplasm. Functionally, participates actively in the response to hyperosmotic and heat shock by preventing the aggregation of stress-denatured proteins and by disaggregating proteins, also in an autonomous, DnaK-independent fashion. Unfolded proteins bind initially to DnaJ; upon interaction with the DnaJ-bound protein, DnaK hydrolyzes its bound ATP, resulting in the formation of a stable complex. GrpE releases ADP from DnaK; ATP binding to DnaK triggers the release of the substrate protein, thus completing the reaction cycle. Several rounds of ATP-dependent interactions between DnaJ, DnaK and GrpE are required for fully efficient folding. Also involved, together with DnaK and GrpE, in the DNA replication of plasmids through activation of initiation proteins. The chain is Chaperone protein DnaJ from Alkalilimnicola ehrlichii (strain ATCC BAA-1101 / DSM 17681 / MLHE-1).